We begin with the raw amino-acid sequence, 112 residues long: Cornifelin homolog (112 aa).

The protein belongs to the cornifelin family.

The chain is Cornifelin homolog (cnfn) from Danio rerio (Zebrafish).